A 363-amino-acid polypeptide reads, in one-letter code: Membrane-bound lytic murein transglycosylase C (363 aa).

A signal peptide spans 1-15 (MKKYIVFAIIPFLFA). The N-palmitoyl cysteine moiety is linked to residue Cys-16. Cys-16 carries S-diacylglycerol cysteine lipidation.

Belongs to the transglycosylase Slt family.

It localises to the cell outer membrane. The catalysed reaction is Exolytic cleavage of the (1-&gt;4)-beta-glycosidic linkage between N-acetylmuramic acid (MurNAc) and N-acetylglucosamine (GlcNAc) residues in peptidoglycan, from either the reducing or the non-reducing ends of the peptidoglycan chains, with concomitant formation of a 1,6-anhydrobond in the MurNAc residue.. In terms of biological role, murein-degrading enzyme. May play a role in recycling of muropeptides during cell elongation and/or cell division. The protein is Membrane-bound lytic murein transglycosylase C of Histophilus somni (strain 129Pt) (Haemophilus somnus).